The chain runs to 197 residues: Holliday junction branch migration complex subunit RuvA (197 aa).

Residues methionine 1–leucine 63 are domain I. The interval threonine 64–proline 142 is domain II. A flexible linker region spans residues proline 142–glutamate 146. The interval threonine 147 to arginine 197 is domain III.

Belongs to the RuvA family. Homotetramer. Forms an RuvA(8)-RuvB(12)-Holliday junction (HJ) complex. HJ DNA is sandwiched between 2 RuvA tetramers; dsDNA enters through RuvA and exits via RuvB. An RuvB hexamer assembles on each DNA strand where it exits the tetramer. Each RuvB hexamer is contacted by two RuvA subunits (via domain III) on 2 adjacent RuvB subunits; this complex drives branch migration. In the full resolvosome a probable DNA-RuvA(4)-RuvB(12)-RuvC(2) complex forms which resolves the HJ.

It localises to the cytoplasm. Its function is as follows. The RuvA-RuvB-RuvC complex processes Holliday junction (HJ) DNA during genetic recombination and DNA repair, while the RuvA-RuvB complex plays an important role in the rescue of blocked DNA replication forks via replication fork reversal (RFR). RuvA specifically binds to HJ cruciform DNA, conferring on it an open structure. The RuvB hexamer acts as an ATP-dependent pump, pulling dsDNA into and through the RuvAB complex. HJ branch migration allows RuvC to scan DNA until it finds its consensus sequence, where it cleaves and resolves the cruciform DNA. The protein is Holliday junction branch migration complex subunit RuvA of Syntrophotalea carbinolica (strain DSM 2380 / NBRC 103641 / GraBd1) (Pelobacter carbinolicus).